The following is a 438-amino-acid chain: Exosome complex component RRP45B (438 aa).

2 disordered regions span residues 293-322 and 334-438; these read PTLA…RAAE and STEE…KNKS. Basic and acidic residues-rich tracts occupy residues 307 to 322 and 334 to 347; these read VKEE…RAAE and STEE…EEAA. Residues 380–394 are compositionally biased toward polar residues; sequence TKSSSTKKMNGSGNA. Over residues 410–429 the composition is skewed to basic and acidic residues; sequence LGKKDTKHKDGEMTLKDAVK.

This sequence belongs to the RNase PH family.

The protein resides in the cytoplasm. The protein localises to the nucleus. In terms of biological role, probable 3'-&gt;5' exoribonuclease involved in the regulation of cuticular wax biosynthesis by controlling the expression of CER3. May act by degrading a specific mRNA species encoding a negative regulator of CER3 transcription. Can perform exosomal functions and complement the yeast rrp45 null mutant. This chain is Exosome complex component RRP45B, found in Arabidopsis thaliana (Mouse-ear cress).